We begin with the raw amino-acid sequence, 59 residues long: Large ribosomal subunit protein bL32 (59 aa).

The protein belongs to the bacterial ribosomal protein bL32 family. Part of the 50S ribosomal subunit.

The polypeptide is Large ribosomal subunit protein bL32 (rpmF) (Bacillus subtilis (strain 168)).